Reading from the N-terminus, the 233-residue chain is Probable endonuclease lcl3 (233 aa).

A helical membrane pass occupies residues 10–29 (ISLRNLSYIILTISTGIVIH). A TNase-like domain is found at 57–218 (NSLYGYVTSV…RKRKLGMHSL (162 aa)). R106 is a catalytic residue. D111 is a Ca(2+) binding site. Active-site residues include E114 and R154.

It belongs to the LCL3 family.

It is found in the mitochondrion. Its subcellular location is the membrane. This Schizosaccharomyces japonicus (strain yFS275 / FY16936) (Fission yeast) protein is Probable endonuclease lcl3 (lcl3).